Reading from the N-terminus, the 25-residue chain is uncharacterized protein (25 aa).

This is an uncharacterized protein from Escherichia coli (Bacteriophage T3).